Consider the following 110-residue polypeptide: Large ribosomal subunit protein uL22 (110 aa).

The protein belongs to the universal ribosomal protein uL22 family. As to quaternary structure, part of the 50S ribosomal subunit.

This protein binds specifically to 23S rRNA; its binding is stimulated by other ribosomal proteins, e.g. L4, L17, and L20. It is important during the early stages of 50S assembly. It makes multiple contacts with different domains of the 23S rRNA in the assembled 50S subunit and ribosome. In terms of biological role, the globular domain of the protein is located near the polypeptide exit tunnel on the outside of the subunit, while an extended beta-hairpin is found that lines the wall of the exit tunnel in the center of the 70S ribosome. The polypeptide is Large ribosomal subunit protein uL22 (Vibrio campbellii (strain ATCC BAA-1116)).